The primary structure comprises 108 residues: Nucleoid-associated protein BQ02190 (108 aa).

Belongs to the YbaB/EbfC family. Homodimer.

The protein resides in the cytoplasm. It is found in the nucleoid. Functionally, binds to DNA and alters its conformation. May be involved in regulation of gene expression, nucleoid organization and DNA protection. This chain is Nucleoid-associated protein BQ02190, found in Bartonella quintana (strain Toulouse) (Rochalimaea quintana).